The chain runs to 404 residues: Exodeoxyribonuclease 7 large subunit (404 aa).

It belongs to the XseA family. In terms of assembly, heterooligomer composed of large and small subunits.

The protein localises to the cytoplasm. The enzyme catalyses Exonucleolytic cleavage in either 5'- to 3'- or 3'- to 5'-direction to yield nucleoside 5'-phosphates.. Functionally, bidirectionally degrades single-stranded DNA into large acid-insoluble oligonucleotides, which are then degraded further into small acid-soluble oligonucleotides. This chain is Exodeoxyribonuclease 7 large subunit, found in Tropheryma whipplei (strain TW08/27) (Whipple's bacillus).